Consider the following 122-residue polypeptide: Replication factor A protein 3 (122 aa).

Belongs to the replication factor A protein 3 family. Component of the heterotrimeric canonical replication protein A complex (RPA). In terms of processing, the N-terminus is blocked.

Its subcellular location is the nucleus. As part of the replication protein A (RPA/RP-A), a single-stranded DNA-binding heterotrimeric complex, may play an essential role in DNA replication, recombination and repair. Binds and stabilizes single-stranded DNA intermediates, preventing complementary DNA reannealing and recruiting different proteins involved in DNA metabolism. Stimulates the activity of a cognate strand exchange protein (SEP1). The chain is Replication factor A protein 3 (RFA3) from Saccharomyces cerevisiae (strain ATCC 204508 / S288c) (Baker's yeast).